A 339-amino-acid polypeptide reads, in one-letter code: Immunoglobulin-binding protein 1 (339 aa).

N-acetylalanine is present on Ala2. Residues 46–60 form the UIM domain; that stretch reads LDLLEKAAEMLSQLD. The tract at residues 98 to 202 is interaction with PPP2CA; that stretch reads RLDHLQRARE…YLLHLQRWID (105 aa). Disordered stretches follow at residues 221–243 and 289–339; these read RDSS…VKPF and APEE…QNMG. Residues 225–290 are interaction with MID1; that stretch reads REASTSNSSR…PDQGIAKAAP (66 aa). Lys241 bears the N6-acetyllysine mark. Positions 301 to 312 are enriched in acidic residues; sequence EEQEEKEEEDDE. The segment covering 313–329 has biased composition (basic and acidic residues); that stretch reads QTLHRAREWDDWKDTHP.

This sequence belongs to the IGBP1/TAP42 family. In terms of assembly, interacts with partially folded PPP2CA, but not with the fully active protein. Interacts with PPP2CB, and with PP4 and PP6. Interacts with MID1 and MID2. Interacts with ubiquitin. Phosphorylated. Post-translationally, monoubiquitination by MID1 triggers calpain-mediated cleavage and switches IGBP1 activity from protective to destructive. Ubiquitously expressed with highest levels in heart, skeletal muscle and pancreas.

The protein localises to the cytoplasm. In terms of biological role, associated to surface IgM-receptor; may be involved in signal transduction. Involved in regulation of the catalytic activity of the phosphatases PP2A, PP4 and PP6 by protecting their partially folded catalytic subunits from degradative polyubiquitination until they associate with regulatory subunits. This is Immunoglobulin-binding protein 1 (IGBP1) from Homo sapiens (Human).